The following is a 284-amino-acid chain: MDGIKKKMIAMKLEKENAMERAVQYEELLKKKEEEREKRESEIAELNTKMKQAQIDCDEVQETLQEQMNKLEETDKRATNAEAEVAAMTRRIRLLEEDLEVSSSRLTETLTKLEEASKTAEESERGRKDLEIRSIADDERLNQLEDQQKEAKYIAEDADRKYDEAARKLAIAEVDFKRAEARLEAAESKIVELEEELRVIGNNMKALEISEQESAQREESYEETIRDLTERLKAAEQRATEAERQVSKLQNEVDHLEDDLLAEKERYKALSGELDQTFAELTGY.

Positions 1–284 (MDGIKKKMIA…DQTFAELTGY (284 aa)) form a coiled coil. The tract at residues 111–131 (TKLEEASKTAEESERGRKDLE) is disordered.

The protein belongs to the tropomyosin family. Homodimer.

Its function is as follows. Tropomyosin, in association with the troponin complex, plays a central role in the calcium dependent regulation of muscle contraction. The sequence is that of Tropomyosin from Schistosoma haematobium (Blood fluke).